Here is a 1048-residue protein sequence, read N- to C-terminus: Protein argonaute 7 (1048 aa).

Over residues 1 to 14 the composition is skewed to basic and acidic residues; the sequence is MEGEREGVVAKNED. Disordered regions lie at residues 1–50 and 121–141; these read MEGE…GSSG and KAAD…KKPP. Positions 16 to 37 are enriched in gly residues; sequence AGGGGGGLGTGGNGGGGGGGSA. A compositionally biased stretch (basic residues) spans 131-141; the sequence is MWKHRPSKKPP. A PAZ domain is found at 422–530; sequence KRCDFLKDLP…VPMELCVVCE (109 aa). Residues 709–1017 form the Piwi domain; that stretch reads LLICVMERRH…AAYRGRLYLE (309 aa).

The protein belongs to the argonaute family. Ago subfamily. As to expression, expressed in the reproductive shoot apex.

Involved in the RNA silencing pathway. May bind to short RNAs such as microRNAs (miRNAs) or short interfering RNAs (siRNAs), and represses the translation of mRNAs which are complementary to them. Regulates shoot apical meristem (SAM) initiation and maintenance and leaf polarization through the trans-acting siRNAS (ta-siRNAs) pathway which probably modulates the expression of the ARF2, ARF3, ARF4, ARF14 and ARF15 genes. The sequence is that of Protein argonaute 7 (AGO7) from Oryza sativa subsp. japonica (Rice).